A 430-amino-acid chain; its full sequence is Serine hydroxymethyltransferase (430 aa).

120 to 122 (GHI) is a (6S)-5,6,7,8-tetrahydrofolate binding site. Position 226 is an N6-(pyridoxal phosphate)lysine (Lys226).

Belongs to the SHMT family. Homodimer. It depends on pyridoxal 5'-phosphate as a cofactor.

Its subcellular location is the cytoplasm. It participates in amino-acid biosynthesis; glycine biosynthesis; glycine from L-serine: step 1/1. Its function is as follows. Catalyzes the reversible interconversion of serine and glycine with a modified folate serving as the one-carbon carrier. Also exhibits a pteridine-independent aldolase activity toward beta-hydroxyamino acids, producing glycine and aldehydes, via a retro-aldol mechanism. The protein is Serine hydroxymethyltransferase of Pyrobaculum neutrophilum (strain DSM 2338 / JCM 9278 / NBRC 100436 / V24Sta) (Thermoproteus neutrophilus).